The following is a 228-amino-acid chain: Small ribosomal subunit protein uS7A (228 aa).

Belongs to the universal ribosomal protein uS7 family.

The polypeptide is Small ribosomal subunit protein uS7A (RpS5a) (Drosophila melanogaster (Fruit fly)).